A 528-amino-acid polypeptide reads, in one-letter code: GMP synthase [glutamine-hydrolyzing] (528 aa).

One can recognise a Glutamine amidotransferase type-1 domain in the interval 13-203 (TVLVVDFGAQ…LYEAAGCRPT (191 aa)). The Nucleophile role is filled by cysteine 90. Residues histidine 177 and glutamate 179 contribute to the active site. Residues 204 to 402 (WTMVNIVEDQ…LGLPAEMVWR (199 aa)) form the GMPS ATP-PPase domain. Position 231–237 (231–237 (SGGVDSA)) interacts with ATP.

In terms of assembly, homodimer.

The catalysed reaction is XMP + L-glutamine + ATP + H2O = GMP + L-glutamate + AMP + diphosphate + 2 H(+). It participates in purine metabolism; GMP biosynthesis; GMP from XMP (L-Gln route): step 1/1. Catalyzes the synthesis of GMP from XMP. This is GMP synthase [glutamine-hydrolyzing] from Thermobifida fusca (strain YX).